The primary structure comprises 69 residues: Cytochrome c oxidase subunit 8A, mitochondrial (69 aa).

Residues 1–25 constitute a mitochondrion transit peptide; it reads MSVLTPLLLRGLTGSARRLPMPCAR. Positions 2-19 match the SIFI-degron motif; it reads SVLTPLLLRGLTGSARRL. Residues 26–36 lie on the Mitochondrial matrix side of the membrane; sequence VHSKPPREQLG. The helical transmembrane segment at 37-60 threads the bilayer; sequence TMDIAIGLTSCFVCFLLPSGWVLS. Over 61–69 the chain is Mitochondrial intermembrane; that stretch reads HLENYKKRE.

It belongs to the cytochrome c oxidase VIII family. In terms of assembly, component of the cytochrome c oxidase (complex IV, CIV), a multisubunit enzyme composed of 14 subunits. The complex is composed of a catalytic core of 3 subunits MT-CO1, MT-CO2 and MT-CO3, encoded in the mitochondrial DNA, and 11 supernumerary subunits COX4I, COX5A, COX5B, COX6A, COX6B, COX6C, COX7A, COX7B, COX7C, COX8 and NDUFA4, which are encoded in the nuclear genome. The complex exists as a monomer or a dimer and forms supercomplexes (SCs) in the inner mitochondrial membrane with NADH-ubiquinone oxidoreductase (complex I, CI) and ubiquinol-cytochrome c oxidoreductase (cytochrome b-c1 complex, complex III, CIII), resulting in different assemblies (supercomplex SCI(1)III(2)IV(1) and megacomplex MCI(2)III(2)IV(2)). Post-translationally, in response to mitochondrial stress, the precursor protein is ubiquitinated by the SIFI complex in the cytoplasm before mitochondrial import, leading to its degradation. Within the SIFI complex, UBR4 initiates ubiquitin chain that are further elongated or branched by KCMF1.

The protein resides in the mitochondrion inner membrane. It functions in the pathway energy metabolism; oxidative phosphorylation. Functionally, component of the cytochrome c oxidase, the last enzyme in the mitochondrial electron transport chain which drives oxidative phosphorylation. The respiratory chain contains 3 multisubunit complexes succinate dehydrogenase (complex II, CII), ubiquinol-cytochrome c oxidoreductase (cytochrome b-c1 complex, complex III, CIII) and cytochrome c oxidase (complex IV, CIV), that cooperate to transfer electrons derived from NADH and succinate to molecular oxygen, creating an electrochemical gradient over the inner membrane that drives transmembrane transport and the ATP synthase. Cytochrome c oxidase is the component of the respiratory chain that catalyzes the reduction of oxygen to water. Electrons originating from reduced cytochrome c in the intermembrane space (IMS) are transferred via the dinuclear copper A center (CU(A)) of subunit 2 and heme A of subunit 1 to the active site in subunit 1, a binuclear center (BNC) formed by heme A3 and copper B (CU(B)). The BNC reduces molecular oxygen to 2 water molecules using 4 electrons from cytochrome c in the IMS and 4 protons from the mitochondrial matrix. In Nycticebus coucang (Slow loris), this protein is Cytochrome c oxidase subunit 8A, mitochondrial (COX8A).